The primary structure comprises 491 residues: Nucleoside transporter 1.2 (491 aa).

The next 6 membrane-spanning stretches (helical) occupy residues 27–47, 82–102, 109–129, 136–156, 173–193, and 209–229; these read FYVYVVAFMCGVSMMMSVNAV, YNLIGIVTSLIMEPLTLLSWF, VRLLGGLVILIVEIIVLMVVP, AGAVATICCTGFIGGFGKSIF, STMMGGVGMSGVLTSLLQIIV, and KIYYGLDVGIQGMTFVALILL. Positions 261 to 273 are enriched in basic and acidic residues; the sequence is HTDEHPTHDKEGR. Disordered stretches follow at residues 261–280 and 290–309; these read HTDEHPTHDKEGRNSSSGKE and AAAKSEGPDAVEESSWPHEV. Residue asparagine 274 is glycosylated (N-linked (GlcNAc...) asparagine). The next 5 helical transmembrane spans lie at 333–353, 361–381, 395–415, 427–447, and 460–480; these read MFVACAFNFLITLFLFPGIAV, WFSTIAVFIFNVFDVLGRFSP, WIIVAASFARVIFVPLLLLHS, VMEVIFGFSNGYVGSMALVLG, and FVAGTLMGISILVGGTIGTVL.

It belongs to the SLC29A/ENT transporter (TC 2.A.57) family.

Its subcellular location is the membrane. It carries out the reaction adenosine(in) + H(+)(in) = adenosine(out) + H(+)(out). The catalysed reaction is uridine(in) + H(+)(in) = uridine(out) + H(+)(out). Sodium-independent nucleoside:H(+) symporter; transports adenosine with high affinity and uridine with moderate affinity. Can transport cytidine and thymidine. The chain is Nucleoside transporter 1.2 from Leishmania donovani.